We begin with the raw amino-acid sequence, 715 residues long: Polyribonucleotide nucleotidyltransferase (715 aa).

D493 and D499 together coordinate Mg(2+). A KH domain is found at 560–619 (PRMITIKINPEKIRDVIGKGGSVIRALTEETGTTIDISDDGVVTIASTSSEGMAEAKKRI). The 69-residue stretch at 629–697 (GQVYEGTVLK…EKGRVRLSAK (69 aa)) folds into the S1 motif domain.

It belongs to the polyribonucleotide nucleotidyltransferase family. Requires Mg(2+) as cofactor.

The protein resides in the cytoplasm. It carries out the reaction RNA(n+1) + phosphate = RNA(n) + a ribonucleoside 5'-diphosphate. Involved in mRNA degradation. Catalyzes the phosphorolysis of single-stranded polyribonucleotides processively in the 3'- to 5'-direction. The protein is Polyribonucleotide nucleotidyltransferase of Burkholderia multivorans (strain ATCC 17616 / 249).